Here is a 504-residue protein sequence, read N- to C-terminus: Protein Dok-7 (504 aa).

Positions 4 to 109 constitute a PH domain; sequence AALVEGQVKL…WDARIRYALG (106 aa). The 106-residue stretch at 105-210 folds into the IRS-type PTB domain; that stretch reads RYALGEVHRF…RGISPTKGPF (106 aa). Disordered regions lie at residues 210 to 229, 249 to 351, and 411 to 483; these read FGLR…TVEE, SHAG…YSSS, and LCLA…PHAG. 2 stretches are compositionally biased toward low complexity: residues 263–279 and 288–310; these read LSSS…SASS and SSSS…AGEA. Residues 331–341 show a composition bias toward polar residues; the sequence is GRQSSSDSGIA.

In terms of assembly, homodimer. Forms a heterotetramer composed of 2 DOK7 and 2 MUSK molecules which facilitates MUSK trans-autophosphorylation on tyrosine residue and activation. Interacts (via IRS-type PTB domain) with MUSK (via cytoplasmic part); requires MUSK phosphorylation. In terms of tissue distribution, preferentially expressed in skeletal muscle and heart. Present in thigh muscle, diaphragm and heart but not in the liver or spleen (at protein level).

It localises to the cell membrane. The protein resides in the synapse. Its function is as follows. Probable muscle-intrinsic activator of MUSK that plays an essential role in neuromuscular synaptogenesis. Acts in aneural activation of MUSK and subsequent acetylcholine receptor (AchR) clustering in myotubes. Induces autophosphorylation of MUSK. This chain is Protein Dok-7 (DOK7), found in Homo sapiens (Human).